Here is a 131-residue protein sequence, read N- to C-terminus: Cuticle protein 79, isoform B (131 aa).

3 repeat units span residues 37–40 (AAPA), 45–48 (AAPA), and 53–56 (AAPA).

In terms of biological role, component of the cuticle of migratory locust which contains more than 100 different structural proteins. The sequence is that of Cuticle protein 79, isoform B from Locusta migratoria (Migratory locust).